A 95-amino-acid polypeptide reads, in one-letter code: Non-specific lipid-transfer protein (95 aa).

Disulfide bonds link Cys-4–Cys-52, Cys-14–Cys-29, and Cys-50–Cys-90.

This sequence belongs to the plant LTP family. In terms of tissue distribution, seeds.

Functionally, plant non-specific lipid-transfer proteins transfer phospholipids as well as galactolipids across membranes. May play a role in wax or cutin deposition in the cell walls of expanding epidermal cells and certain secretory tissues. The protein is Non-specific lipid-transfer protein of Eleusine coracana (Indian finger millet).